Reading from the N-terminus, the 464-residue chain is Arginine biosynthesis bifunctional protein ArgJ, mitochondrial (464 aa).

Substrate is bound by residues Thr-191, Lys-220, Thr-231, Glu-318, Asn-459, and Thr-464. The active-site Nucleophile is the Thr-231.

It belongs to the ArgJ family. As to quaternary structure, heterodimer of an alpha and a beta chain. In terms of processing, the alpha and beta chains are autoproteolytically processed from a single precursor protein within the mitochondrion.

It is found in the mitochondrion matrix. The enzyme catalyses N(2)-acetyl-L-ornithine + L-glutamate = N-acetyl-L-glutamate + L-ornithine. It carries out the reaction L-glutamate + acetyl-CoA = N-acetyl-L-glutamate + CoA + H(+). It participates in amino-acid biosynthesis; L-arginine biosynthesis; L-ornithine and N-acetyl-L-glutamate from L-glutamate and N(2)-acetyl-L-ornithine (cyclic): step 1/1. Its pathway is amino-acid biosynthesis; L-arginine biosynthesis; N(2)-acetyl-L-ornithine from L-glutamate: step 1/4. Functionally, catalyzes two activities which are involved in the cyclic version of arginine biosynthesis: the synthesis of acetylglutamate from glutamate and acetyl-CoA, and of ornithine by transacetylation between acetylornithine and glutamate. The sequence is that of Arginine biosynthesis bifunctional protein ArgJ, mitochondrial from Pyricularia oryzae (strain 70-15 / ATCC MYA-4617 / FGSC 8958) (Rice blast fungus).